The following is a 255-amino-acid chain: Imidazole glycerol phosphate synthase subunit HisF (255 aa).

Residues D11 and D130 contribute to the active site.

This sequence belongs to the HisA/HisF family. In terms of assembly, heterodimer of HisH and HisF.

It is found in the cytoplasm. It catalyses the reaction 5-[(5-phospho-1-deoxy-D-ribulos-1-ylimino)methylamino]-1-(5-phospho-beta-D-ribosyl)imidazole-4-carboxamide + L-glutamine = D-erythro-1-(imidazol-4-yl)glycerol 3-phosphate + 5-amino-1-(5-phospho-beta-D-ribosyl)imidazole-4-carboxamide + L-glutamate + H(+). The protein operates within amino-acid biosynthesis; L-histidine biosynthesis; L-histidine from 5-phospho-alpha-D-ribose 1-diphosphate: step 5/9. IGPS catalyzes the conversion of PRFAR and glutamine to IGP, AICAR and glutamate. The HisF subunit catalyzes the cyclization activity that produces IGP and AICAR from PRFAR using the ammonia provided by the HisH subunit. The protein is Imidazole glycerol phosphate synthase subunit HisF of Rhodopseudomonas palustris (strain HaA2).